The chain runs to 373 residues: Sorting nexin-21 (373 aa).

The segment at 1–107 (MHRGTQEGAM…RSPPPDGQWG (107 aa)) is disordered. A compositionally biased stretch (low complexity) spans 21-37 (ALAGDGPGEAAASPEAE). The span at 55–65 (SRLSGTLSFTS) shows a compositional bias: polar residues. Over residues 66–81 (AEDDEDDEDEDDEEAG) the composition is skewed to acidic residues. Residues 129-246 (QRLLFEVTSA…DFFVLPELRR (118 aa)) enclose the PX domain. Arg171, Ser173, Lys198, and Arg212 together coordinate a 1,2-diacyl-sn-glycero-3-phospho-(1D-myo-inositol-3-phosphate).

It belongs to the sorting nexin family. Monomer. In terms of tissue distribution, highly expressed in fetus liver, but only weakly expressed in brain, skeleton muscle, smooth muscle, and cardiac muscle, kidney, and adrenal gland.

The protein localises to the cytoplasmic vesicle membrane. The protein resides in the early endosome membrane. Binds to membranes enriched in phosphatidylinositol 3-phosphate (PtdIns(P3)) and phosphatidylinositol 4,5-bisphosphate. May be involved in several stages of intracellular trafficking. The chain is Sorting nexin-21 (SNX21) from Homo sapiens (Human).